The chain runs to 152 residues: Large-conductance mechanosensitive channel (152 aa).

The next 2 helical transmembrane spans lie at 14–34 (VIDL…VKSL) and 84–104 (VGQF…VFLL).

This sequence belongs to the MscL family. In terms of assembly, homopentamer.

The protein resides in the cell inner membrane. In terms of biological role, channel that opens in response to stretch forces in the membrane lipid bilayer. May participate in the regulation of osmotic pressure changes within the cell. This is Large-conductance mechanosensitive channel from Laribacter hongkongensis (strain HLHK9).